Consider the following 62-residue polypeptide: DNA gyrase inhibitor YacG (62 aa).

Positions 9, 12, 27, and 31 each coordinate Zn(2+). Basic and acidic residues predominate over residues 43-53; it reads GYRIPGEKAPE. The interval 43–62 is disordered; it reads GYRIPGEKAPESGDEEPGDE.

The protein belongs to the DNA gyrase inhibitor YacG family. Interacts with GyrB. Requires Zn(2+) as cofactor.

In terms of biological role, inhibits all the catalytic activities of DNA gyrase by preventing its interaction with DNA. Acts by binding directly to the C-terminal domain of GyrB, which probably disrupts DNA binding by the gyrase. The polypeptide is DNA gyrase inhibitor YacG (Citrifermentans bemidjiense (strain ATCC BAA-1014 / DSM 16622 / JCM 12645 / Bem) (Geobacter bemidjiensis)).